The chain runs to 465 residues: Glutamate--tRNA ligase (465 aa).

Residues 11–21 carry the 'HIGH' region motif; sequence PSPTGFIHLGN. Positions 243 to 247 match the 'KMSKS' region motif; it reads KMSKR. Lysine 246 is a binding site for ATP.

This sequence belongs to the class-I aminoacyl-tRNA synthetase family. Glutamate--tRNA ligase type 1 subfamily. In terms of assembly, monomer.

The protein resides in the cytoplasm. It carries out the reaction tRNA(Glu) + L-glutamate + ATP = L-glutamyl-tRNA(Glu) + AMP + diphosphate. Its function is as follows. Catalyzes the attachment of glutamate to tRNA(Glu) in a two-step reaction: glutamate is first activated by ATP to form Glu-AMP and then transferred to the acceptor end of tRNA(Glu). This is Glutamate--tRNA ligase from Cupriavidus metallidurans (strain ATCC 43123 / DSM 2839 / NBRC 102507 / CH34) (Ralstonia metallidurans).